Reading from the N-terminus, the 394-residue chain is NAD(P)H-quinone oxidoreductase subunit H (394 aa).

It belongs to the complex I 49 kDa subunit family. In terms of assembly, NDH-1 can be composed of about 15 different subunits; different subcomplexes with different compositions have been identified which probably have different functions.

Its subcellular location is the cellular thylakoid membrane. It catalyses the reaction a plastoquinone + NADH + (n+1) H(+)(in) = a plastoquinol + NAD(+) + n H(+)(out). The enzyme catalyses a plastoquinone + NADPH + (n+1) H(+)(in) = a plastoquinol + NADP(+) + n H(+)(out). Its function is as follows. NDH-1 shuttles electrons from an unknown electron donor, via FMN and iron-sulfur (Fe-S) centers, to quinones in the respiratory and/or the photosynthetic chain. The immediate electron acceptor for the enzyme in this species is believed to be plastoquinone. Couples the redox reaction to proton translocation, and thus conserves the redox energy in a proton gradient. Cyanobacterial NDH-1 also plays a role in inorganic carbon-concentration. This is NAD(P)H-quinone oxidoreductase subunit H from Nostoc punctiforme (strain ATCC 29133 / PCC 73102).